The primary structure comprises 209 residues: Uracil phosphoribosyltransferase (209 aa).

5-phospho-alpha-D-ribose 1-diphosphate-binding positions include R79, R104, and 131-139 (DPMLATGGS). Residues I194 and 199–201 (GDA) contribute to the uracil site. D200 serves as a coordination point for 5-phospho-alpha-D-ribose 1-diphosphate.

This sequence belongs to the UPRTase family. Mg(2+) is required as a cofactor.

The catalysed reaction is UMP + diphosphate = 5-phospho-alpha-D-ribose 1-diphosphate + uracil. The protein operates within pyrimidine metabolism; UMP biosynthesis via salvage pathway; UMP from uracil: step 1/1. Its activity is regulated as follows. Allosterically activated by GTP. Functionally, catalyzes the conversion of uracil and 5-phospho-alpha-D-ribose 1-diphosphate (PRPP) to UMP and diphosphate. The protein is Uracil phosphoribosyltransferase of Clostridium acetobutylicum (strain ATCC 824 / DSM 792 / JCM 1419 / IAM 19013 / LMG 5710 / NBRC 13948 / NRRL B-527 / VKM B-1787 / 2291 / W).